Here is a 336-residue protein sequence, read N- to C-terminus: Inositol 2-dehydrogenase (336 aa).

Belongs to the Gfo/Idh/MocA family. In terms of assembly, homotetramer.

It carries out the reaction myo-inositol + NAD(+) = scyllo-inosose + NADH + H(+). Involved in the oxidation of myo-inositol (MI) to 2-keto-myo-inositol (2KMI or 2-inosose). The sequence is that of Inositol 2-dehydrogenase from Pseudomonas fluorescens (strain ATCC BAA-477 / NRRL B-23932 / Pf-5).